Reading from the N-terminus, the 115-residue chain is UPF0102 protein Swol_1475 (115 aa).

It belongs to the UPF0102 family.

The protein is UPF0102 protein Swol_1475 of Syntrophomonas wolfei subsp. wolfei (strain DSM 2245B / Goettingen).